The chain runs to 448 residues: tRNA(Ile)-lysidine synthase (448 aa).

25–30 (SGGSDS) contacts ATP.

Belongs to the tRNA(Ile)-lysidine synthase family.

Its subcellular location is the cytoplasm. The enzyme catalyses cytidine(34) in tRNA(Ile2) + L-lysine + ATP = lysidine(34) in tRNA(Ile2) + AMP + diphosphate + H(+). Ligates lysine onto the cytidine present at position 34 of the AUA codon-specific tRNA(Ile) that contains the anticodon CAU, in an ATP-dependent manner. Cytidine is converted to lysidine, thus changing the amino acid specificity of the tRNA from methionine to isoleucine. This Brucella canis (strain ATCC 23365 / NCTC 10854 / RM-666) protein is tRNA(Ile)-lysidine synthase.